A 304-amino-acid polypeptide reads, in one-letter code: Small ribosomal subunit protein uS2 (304 aa).

Position 2 is an N-acetylserine (Ser2). Laminin-binding stretches follow at residues 161 to 180 and 205 to 229; these read IPCN…MLAR and RDPE…EFQG. [DE]-W-[ST] repeat units follow at residues 230 to 232, 245 to 247, 275 to 277, 284 to 286, and 302 to 304; these read EWS and DWS. The segment at 242–304 is laminin-binding; that stretch reads EVADWSEGVA…DWGGATSDWS (63 aa). Residues 257 to 304 form a disordered region; that stretch reads IQQFPAGTPAPAPAVKTEDWSTQPATEDWSTAPTAQASDWGGATSDWS. The segment covering 276-293 has biased composition (polar residues); the sequence is WSTQPATEDWSTAPTAQA.

It belongs to the universal ribosomal protein uS2 family. As to quaternary structure, monomer (37LRP) and homodimer (67LR). Component of the small ribosomal subunit. Mature ribosomes consist of a small (40S) and a large (60S) subunit. The 40S subunit contains about 33 different proteins and 1 molecule of RNA (18S). The 60S subunit contains about 49 different proteins and 3 molecules of RNA (28S, 5.8S and 5S). Interacts with rps21. Interacts with several laminins including at least lamb1. Interacts with mdk. In terms of processing, acylated. Acylation may be a prerequisite for conversion of the monomeric 37 kDa laminin receptor precursor (37LRP) to the mature dimeric 67 kDa laminin receptor (67LR), and may provide a mechanism for membrane association. Post-translationally, cleaved by stromelysin-3 (ST3) at the cell surface. Cleavage by stromelysin-3 may be a mechanism to alter cell-extracellular matrix interactions.

It is found in the cell membrane. Its subcellular location is the cytoplasm. The protein resides in the nucleus. Its function is as follows. Required for the assembly and/or stability of the 40S ribosomal subunit. Required for the processing of the 20S rRNA-precursor to mature 18S rRNA in a late step of the maturation of 40S ribosomal subunits. Also functions as a cell surface receptor for laminin. Plays a role in cell adhesion to the basement membrane and in the consequent activation of signaling transduction pathways. May play a role in cell fate determination and tissue morphogenesis. The polypeptide is Small ribosomal subunit protein uS2 (rpsa) (Sparus aurata (Gilthead sea bream)).